The following is a 101-amino-acid chain: NADH-quinone oxidoreductase subunit K (101 aa).

The next 3 helical transmembrane spans lie at 4 to 24, 30 to 50, and 61 to 81; these read LSHYLILGSLLFAISVVGIFL, IVLLMAIELMLLAVNLNFIAF, and VFVFFILTVAAAESAIGLAIL.

Belongs to the complex I subunit 4L family. In terms of assembly, NDH-1 is composed of 14 different subunits. Subunits NuoA, H, J, K, L, M, N constitute the membrane sector of the complex.

The protein resides in the cell inner membrane. It carries out the reaction a quinone + NADH + 5 H(+)(in) = a quinol + NAD(+) + 4 H(+)(out). Its function is as follows. NDH-1 shuttles electrons from NADH, via FMN and iron-sulfur (Fe-S) centers, to quinones in the respiratory chain. The immediate electron acceptor for the enzyme in this species is believed to be ubiquinone. Couples the redox reaction to proton translocation (for every two electrons transferred, four hydrogen ions are translocated across the cytoplasmic membrane), and thus conserves the redox energy in a proton gradient. This Methylovorus glucosotrophus (strain SIP3-4) protein is NADH-quinone oxidoreductase subunit K.